A 477-amino-acid polypeptide reads, in one-letter code: Probable cytosolic Fe-S cluster assembly factor GL21135 (477 aa).

Positions 23, 69, 72, 75, 188, 244, 396, and 400 each coordinate [4Fe-4S] cluster.

Belongs to the NARF family.

Functionally, component of the cytosolic iron-sulfur (Fe/S) protein assembly machinery. Required for maturation of extramitochondrial Fe/S proteins. In Drosophila persimilis (Fruit fly), this protein is Probable cytosolic Fe-S cluster assembly factor GL21135.